Here is a 411-residue protein sequence, read N- to C-terminus: Formate-dependent phosphoribosylglycinamide formyltransferase (411 aa).

25 to 26 is a binding site for N(1)-(5-phospho-beta-D-ribosyl)glycinamide; the sequence is EL. Residues R118, K159, 164–169, 199–202, and E207 contribute to the ATP site; these read SSGAGQ and EQYI. The 196-residue stretch at 123–318 folds into the ATP-grasp domain; it reads TFAHDKLGLP…EFDLHARAIL (196 aa). Mg(2+)-binding residues include E277 and E289. N(1)-(5-phospho-beta-D-ribosyl)glycinamide contacts are provided by residues D296, K366, and 373–374; that span reads RR.

It belongs to the PurK/PurT family. As to quaternary structure, homodimer.

The enzyme catalyses N(1)-(5-phospho-beta-D-ribosyl)glycinamide + formate + ATP = N(2)-formyl-N(1)-(5-phospho-beta-D-ribosyl)glycinamide + ADP + phosphate + H(+). The protein operates within purine metabolism; IMP biosynthesis via de novo pathway; N(2)-formyl-N(1)-(5-phospho-D-ribosyl)glycinamide from N(1)-(5-phospho-D-ribosyl)glycinamide (formate route): step 1/1. In terms of biological role, involved in the de novo purine biosynthesis. Catalyzes the transfer of formate to 5-phospho-ribosyl-glycinamide (GAR), producing 5-phospho-ribosyl-N-formylglycinamide (FGAR). Formate is provided by PurU via hydrolysis of 10-formyl-tetrahydrofolate. The protein is Formate-dependent phosphoribosylglycinamide formyltransferase of Corynebacterium jeikeium (strain K411).